Here is a 147-residue protein sequence, read N- to C-terminus: Cyanate hydratase (147 aa).

Residues Arg-88, Glu-91, and Ser-114 contribute to the active site.

This sequence belongs to the cyanase family.

The enzyme catalyses cyanate + hydrogencarbonate + 3 H(+) = NH4(+) + 2 CO2. Catalyzes the reaction of cyanate with bicarbonate to produce ammonia and carbon dioxide. This is Cyanate hydratase from Thiobacillus denitrificans (strain ATCC 25259 / T1).